Reading from the N-terminus, the 347-residue chain is GMP reductase (347 aa).

Position 108–131 (Ala-108–Ala-131) interacts with NADP(+). K(+) is bound by residues Gly-181 and Gly-183. Cys-186 acts as the Thioimidate intermediate in catalysis. Ile-216–Val-239 is an NADP(+) binding site.

This sequence belongs to the IMPDH/GMPR family. GuaC type 1 subfamily. In terms of assembly, homotetramer.

The enzyme catalyses IMP + NH4(+) + NADP(+) = GMP + NADPH + 2 H(+). Its function is as follows. Catalyzes the irreversible NADPH-dependent deamination of GMP to IMP. It functions in the conversion of nucleobase, nucleoside and nucleotide derivatives of G to A nucleotides, and in maintaining the intracellular balance of A and G nucleotides. This Shigella boydii serotype 18 (strain CDC 3083-94 / BS512) protein is GMP reductase.